Reading from the N-terminus, the 419-residue chain is Serine hydroxymethyltransferase (419 aa).

(6S)-5,6,7,8-tetrahydrofolate-binding positions include leucine 121 and 125–127; that span reads GHL. An N6-(pyridoxal phosphate)lysine modification is found at lysine 229. Residue 354-356 coordinates (6S)-5,6,7,8-tetrahydrofolate; it reads SPF.

This sequence belongs to the SHMT family. In terms of assembly, homodimer. It depends on pyridoxal 5'-phosphate as a cofactor.

The protein resides in the cytoplasm. It catalyses the reaction (6R)-5,10-methylene-5,6,7,8-tetrahydrofolate + glycine + H2O = (6S)-5,6,7,8-tetrahydrofolate + L-serine. It functions in the pathway one-carbon metabolism; tetrahydrofolate interconversion. It participates in amino-acid biosynthesis; glycine biosynthesis; glycine from L-serine: step 1/1. Its function is as follows. Catalyzes the reversible interconversion of serine and glycine with tetrahydrofolate (THF) serving as the one-carbon carrier. This reaction serves as the major source of one-carbon groups required for the biosynthesis of purines, thymidylate, methionine, and other important biomolecules. Also exhibits THF-independent aldolase activity toward beta-hydroxyamino acids, producing glycine and aldehydes, via a retro-aldol mechanism. This chain is Serine hydroxymethyltransferase, found in Coxiella burnetii (strain RSA 331 / Henzerling II).